The primary structure comprises 257 residues: Gamma-secretase subunit APH-1B (257 aa).

7 helical membrane-spanning segments follow: residues 5–25, 32–52, 70–90, 115–135, 158–178, 186–206, and 213–233; these read VFFG…VFTI, IIFL…SSLV, YLLI…RFAY, LLAY…SFVN, YSAF…IVFF, WGIL…TFIS, and LASA…AAGG.

This sequence belongs to the APH-1 family. In terms of assembly, probable component of the gamma-secretase complex, a complex composed of a presenilin homodimer (PSEN1 or PSEN2), nicastrin (NCSTN), APH1 (APH1A or APH1B) and PEN2. Such minimal complex is sufficient for secretase activity, although other components may exist. Interacts with PSEN1 and PSEN2.

It localises to the membrane. Its function is as follows. Probable subunit of the gamma-secretase complex, an endoprotease complex that catalyzes the intramembrane cleavage of integral proteins such as Notch receptors and APP (amyloid-beta precursor protein). It probably represents a stabilizing cofactor for the presenilin homodimer that promotes the formation of a stable complex. Probably present in a minority of gamma-secretase complexes compared to APH1A. This is Gamma-secretase subunit APH-1B (APH1B) from Pongo abelii (Sumatran orangutan).